A 628-amino-acid polypeptide reads, in one-letter code: Kinesin-like protein tea2 (628 aa).

The interval 2 to 122 (SSSSSKPVNT…TTSQQTNSKG (121 aa)) is interaction with mal3. Phosphoserine is present on Ser82. In terms of domain architecture, Kinesin motor spans 132–460 (GIITSIRIRP…LKFASRAQNL (329 aa)). ATP is bound at residue 218–225 (GMTGTGKT). A coiled-coil region spans residues 530–557 (LRMEELLSDHNFEIADLRDELQDKEQII). Positions 588-628 (VTRGSRSSSDQFSNETKTEILPDDQQQSKKDSVTQETQLLS) are disordered. A compositionally biased stretch (polar residues) spans 589–602 (TRGSRSSSDQFSNE). Over residues 603–620 (TKTEILPDDQQQSKKDSV) the composition is skewed to basic and acidic residues.

The protein belongs to the TRAFAC class myosin-kinesin ATPase superfamily. Kinesin family. Interacts with mal3 and tip1.

Its subcellular location is the cytoplasm. It localises to the cytoskeleton. Promotes microtubule growth, possibly through interactions with the microtubule end, and is important for establishing and maintaining polarized growth along the long axis of the cell. Acts as a kinesin motor protein that moves along microtubules and is required for proper localization of tea1 and tip1 to the cell tips and microtubules, respectively. ATPase activity stimulated via interaction with mal3. This chain is Kinesin-like protein tea2, found in Schizosaccharomyces pombe (strain 972 / ATCC 24843) (Fission yeast).